Consider the following 380-residue polypeptide: Crotonobetainyl-CoA reductase (380 aa).

It belongs to the acyl-CoA dehydrogenase family. Homotetramer. FAD is required as a cofactor.

It localises to the cytoplasm. The catalysed reaction is 4-(trimethylamino)butanoyl-CoA + oxidized [electron-transfer flavoprotein] + H(+) = crotonobetainyl-CoA + reduced [electron-transfer flavoprotein]. It functions in the pathway amine and polyamine metabolism; carnitine metabolism. Functionally, catalyzes the reduction of crotonobetainyl-CoA to gamma-butyrobetainyl-CoA. The polypeptide is Crotonobetainyl-CoA reductase (Citrobacter koseri (strain ATCC BAA-895 / CDC 4225-83 / SGSC4696)).